The chain runs to 1317 residues: DNA-directed RNA polymerase subunit beta' (1317 aa).

Residues cysteine 60, cysteine 62, cysteine 75, and cysteine 78 each coordinate Zn(2+). The segment at 183–209 (ELEDEGAKSDVKRKVRDGGEREMRQLR) is disordered. Residues aspartate 535, aspartate 537, and aspartate 539 each coordinate Mg(2+). Cysteine 890, cysteine 967, cysteine 974, and cysteine 977 together coordinate Zn(2+).

This sequence belongs to the RNA polymerase beta' chain family. In terms of assembly, the RNAP catalytic core consists of 2 alpha, 1 beta, 1 beta' and 1 omega subunit. When a sigma factor is associated with the core the holoenzyme is formed, which can initiate transcription. Mg(2+) is required as a cofactor. Requires Zn(2+) as cofactor.

It catalyses the reaction RNA(n) + a ribonucleoside 5'-triphosphate = RNA(n+1) + diphosphate. Its function is as follows. DNA-dependent RNA polymerase catalyzes the transcription of DNA into RNA using the four ribonucleoside triphosphates as substrates. The sequence is that of DNA-directed RNA polymerase subunit beta' from Mycolicibacterium vanbaalenii (strain DSM 7251 / JCM 13017 / BCRC 16820 / KCTC 9966 / NRRL B-24157 / PYR-1) (Mycobacterium vanbaalenii).